Consider the following 395-residue polypeptide: S-adenosylmethionine synthase (395 aa).

His14 contacts ATP. Mg(2+) is bound at residue Asp16. Glu42 lines the K(+) pocket. Residues Glu55 and Gln98 each coordinate L-methionine. The interval 98-108 is flexible loop; sequence QSPDIALGVDK. ATP is bound by residues 174-176, 240-241, Asp249, 255-256, Ala272, and Lys276; these read DGK, RF, and RK. An L-methionine-binding site is contributed by Asp249. Lys280 contacts L-methionine.

The protein belongs to the AdoMet synthase family. As to quaternary structure, homotetramer; dimer of dimers. Mg(2+) is required as a cofactor. Requires K(+) as cofactor.

It localises to the cytoplasm. The enzyme catalyses L-methionine + ATP + H2O = S-adenosyl-L-methionine + phosphate + diphosphate. Its pathway is amino-acid biosynthesis; S-adenosyl-L-methionine biosynthesis; S-adenosyl-L-methionine from L-methionine: step 1/1. In terms of biological role, catalyzes the formation of S-adenosylmethionine (AdoMet) from methionine and ATP. The overall synthetic reaction is composed of two sequential steps, AdoMet formation and the subsequent tripolyphosphate hydrolysis which occurs prior to release of AdoMet from the enzyme. The protein is S-adenosylmethionine synthase of Thermotoga maritima (strain ATCC 43589 / DSM 3109 / JCM 10099 / NBRC 100826 / MSB8).